A 282-amino-acid chain; its full sequence is Bifunctional protein FolD (282 aa).

NADP(+) contacts are provided by residues 165–167 and isoleucine 231; that span reads GAS.

It belongs to the tetrahydrofolate dehydrogenase/cyclohydrolase family. Homodimer.

It carries out the reaction (6R)-5,10-methylene-5,6,7,8-tetrahydrofolate + NADP(+) = (6R)-5,10-methenyltetrahydrofolate + NADPH. The catalysed reaction is (6R)-5,10-methenyltetrahydrofolate + H2O = (6R)-10-formyltetrahydrofolate + H(+). The protein operates within one-carbon metabolism; tetrahydrofolate interconversion. Catalyzes the oxidation of 5,10-methylenetetrahydrofolate to 5,10-methenyltetrahydrofolate and then the hydrolysis of 5,10-methenyltetrahydrofolate to 10-formyltetrahydrofolate. This Francisella tularensis subsp. holarctica (strain FTNF002-00 / FTA) protein is Bifunctional protein FolD.